Here is a 235-residue protein sequence, read N- to C-terminus: MKHGSVPATPEAASLVFGDRLEAAELYARILAGAGVEWGLLGPREVDRVWERHILNSAALGELMEPGERVADIGSGAGLPGIPLALARPDIHVTLIEPLLRRSEFLRETVTELGLDVTVVRGRAEDREVRDRVGEMDVVTSRAVASLDKLTRWSVPFLRDGGRMLPIKGERAEVEIEEHRRVMESLGAVDARVVRCGANYLSPPVTVVDARRRAAKPGRNKSGRTARSRGRTGRR.

Residues G74, L79, 124–125 (AE), and R142 each bind S-adenosyl-L-methionine. Positions 211 to 235 (RRRAAKPGRNKSGRTARSRGRTGRR) are disordered. The span at 213-235 (RAAKPGRNKSGRTARSRGRTGRR) shows a compositional bias: basic residues.

The protein belongs to the methyltransferase superfamily. RNA methyltransferase RsmG family.

Its subcellular location is the cytoplasm. In terms of biological role, specifically methylates the N7 position of guanine in position 518 of 16S rRNA. This chain is Ribosomal RNA small subunit methyltransferase G, found in Mycolicibacterium smegmatis (strain ATCC 700084 / mc(2)155) (Mycobacterium smegmatis).